A 973-amino-acid chain; its full sequence is UvrABC system protein A (973 aa).

An ATP-binding site is contributed by 34 to 41; that stretch reads GLSGSGKS. 2 ABC transporter domains span residues 331-609 and 629-958; these read WAKS…PKSL and PKKG…HFLK. Residue 662–669 coordinates ATP; sequence GVSGGGKS. The C4-type zinc finger occupies 761–787; it reads CEACQGDGVIKIEMHFLPDVYVTCDVC.

Belongs to the ABC transporter superfamily. UvrA family. In terms of assembly, forms a heterotetramer with UvrB during the search for lesions.

Its subcellular location is the cytoplasm. In terms of biological role, the UvrABC repair system catalyzes the recognition and processing of DNA lesions. UvrA is an ATPase and a DNA-binding protein. A damage recognition complex composed of 2 UvrA and 2 UvrB subunits scans DNA for abnormalities. When the presence of a lesion has been verified by UvrB, the UvrA molecules dissociate. The polypeptide is UvrABC system protein A (Agrobacterium fabrum (strain C58 / ATCC 33970) (Agrobacterium tumefaciens (strain C58))).